Reading from the N-terminus, the 453-residue chain is Serine incorporator 1 (453 aa).

G2 carries the N-myristoyl glycine lipid modification. Residues 2–39 (GSVLGLCSMASWIPCLCGSAPCLLCRCCPSGNNSTVTR) lie on the Cytoplasmic side of the membrane. A helical membrane pass occupies residues 40 to 60 (LIYALFLLVGVCVACVMLIPG). At 61-88 (MEEQLNKIPGFCENEKGMVPCNILVGYK) the chain is on the lumenal side. A helical membrane pass occupies residues 89–109 (AVYRLCFGLAMFYLLLSLLMI). Topologically, residues 110–123 (KVKSSSDPRAAIHN) are cytoplasmic. A helical membrane pass occupies residues 124 to 144 (GFWFFKFAAAIAIIIGAFFIP). The Lumenal segment spans residues 145 to 151 (EGTFTTV). Residues 152–172 (WFYVGMAGAFCFILIQLVLLI) traverse the membrane as a helical segment. Over 173–197 (DFAHSWNESWVEKMEEGNSRCWYAA) the chain is Cytoplasmic. Residues 198-218 (LLSATALNYLLSLVAVVLFFV) traverse the membrane as a helical segment. Residues 219–231 (YYTHPASCAENKA) are Lumenal-facing. A helical membrane pass occupies residues 232-252 (FISVNMLLCLGASIMSILPKI). Residues 253–259 (QESQPRS) are Cytoplasmic-facing. The helical transmembrane segment at 260-280 (GLLQSSVITVYTMYLTWSAMT) threads the bilayer. Over 281–309 (NEPETECNPSLLNIIGYNTTSTVSKEGQS) the chain is Lumenal. The helical transmembrane segment at 310 to 330 (VQWWHTQGIIGLILFLLCVFY) threads the bilayer. Residues 331–387 (SSIRTSNNSQVNKLTLTSDESTLIEDGGARNDGSLEDGDDVHRAVDNERDGVTYSYS) lie on the Cytoplasmic side of the membrane. At S351 the chain carries Phosphoserine. At T352 the chain carries Phosphothreonine. S364 carries the phosphoserine modification. Residues 388–408 (FFHFMLFLASLYIMMTLTNWY) traverse the membrane as a helical segment. Residues 409-426 (RYEPSREMKSQWTAVWVK) are Lumenal-facing. A helical membrane pass occupies residues 427 to 447 (ISSSWIGIVLYVWTLVAPLVL). Topologically, residues 448–453 (TNRDFD) are cytoplasmic.

Belongs to the TDE1 family. As to quaternary structure, interacts with SPTLC1.

The protein resides in the endoplasmic reticulum membrane. Enhances the incorporation of serine into phosphatidylserine and sphingolipids. The protein is Serine incorporator 1 (SERINC1) of Bos taurus (Bovine).